The sequence spans 351 residues: Small ribosomal subunit biogenesis GTPase RsgA (351 aa).

The segment covering 1–12 (MAKHKLSKGQQR) has biased composition (basic residues). The disordered stretch occupies residues 1–37 (MAKHKLSKGQQRRVRENHQRRLKKQDNKPEMDDNQLG). Over residues 13 to 31 (RVRENHQRRLKKQDNKPEM) the composition is skewed to basic and acidic residues. Positions 112-274 (YYDGIKPIAA…VIDSPGVREF (163 aa)) constitute a CP-type G domain. Residues 160 to 163 (NKID) and 214 to 222 (GQSGVGKSS) contribute to the GTP site. Zn(2+) is bound by residues C298, C303, H305, and C311.

Belongs to the TRAFAC class YlqF/YawG GTPase family. RsgA subfamily. Monomer. Associates with 30S ribosomal subunit, binds 16S rRNA. Requires Zn(2+) as cofactor.

Its subcellular location is the cytoplasm. Functionally, one of several proteins that assist in the late maturation steps of the functional core of the 30S ribosomal subunit. Helps release RbfA from mature subunits. May play a role in the assembly of ribosomal proteins into the subunit. Circularly permuted GTPase that catalyzes slow GTP hydrolysis, GTPase activity is stimulated by the 30S ribosomal subunit. The protein is Small ribosomal subunit biogenesis GTPase RsgA of Photorhabdus laumondii subsp. laumondii (strain DSM 15139 / CIP 105565 / TT01) (Photorhabdus luminescens subsp. laumondii).